The following is a 402-amino-acid chain: Cysteine desulfurase NifS (402 aa).

Pyridoxal 5'-phosphate contacts are provided by residues 72–73 (GT), N151, Q179, and 199–201 (CGH). An N6-(pyridoxal phosphate)lysine modification is found at K202. T237 is a binding site for pyridoxal 5'-phosphate. Catalysis depends on C325, which acts as the Cysteine persulfide intermediate. Residue C325 participates in [2Fe-2S] cluster binding.

Belongs to the class-V pyridoxal-phosphate-dependent aminotransferase family. NifS/IscS subfamily. Homodimer. It depends on pyridoxal 5'-phosphate as a cofactor.

The catalysed reaction is (sulfur carrier)-H + L-cysteine = (sulfur carrier)-SH + L-alanine. Inhibited by equimolar concentrations of p-chloromercuribenzoic acid, iodoacetamide or N-ethylmaleimide. Its function is as follows. Catalyzes the removal of elemental sulfur atoms from cysteine to produce alanine. Seems to participate in the biosynthesis of the nitrogenase metalloclusters by providing the inorganic sulfur required for the Fe-S core formation. This Azotobacter vinelandii protein is Cysteine desulfurase NifS.